A 436-amino-acid polypeptide reads, in one-letter code: Trigger factor (436 aa).

Positions 163 to 248 (GDRVTLDFAG…VKEVAEGVLP (86 aa)) constitute a PPIase FKBP-type domain.

The protein belongs to the FKBP-type PPIase family. Tig subfamily.

It localises to the cytoplasm. It catalyses the reaction [protein]-peptidylproline (omega=180) = [protein]-peptidylproline (omega=0). Its function is as follows. Involved in protein export. Acts as a chaperone by maintaining the newly synthesized protein in an open conformation. Functions as a peptidyl-prolyl cis-trans isomerase. This chain is Trigger factor, found in Bordetella petrii (strain ATCC BAA-461 / DSM 12804 / CCUG 43448).